The primary structure comprises 1040 residues: Vitamin B12-dependent ribonucleotide reductase (1040 aa).

Residues Ser-169, 213-214, Gly-242, 420-424, and 604-608 each bind substrate; these read AC, NPCSE, and PTGTI. Cys-214 and Cys-433 are oxidised to a cystine. The active-site Proton acceptor is Asn-420. The Cysteine radical intermediate role is filled by Cys-422. Glu-424 serves as the catalytic Proton acceptor. Disordered stretches follow at residues 909 to 932 and 969 to 988; these read SAEG…GATA and GSAT…SDGA. Positions 969–979 are enriched in polar residues; the sequence is GSATNGHSNGQ.

It belongs to the ribonucleoside diphosphate reductase class-2 family. Adenosylcob(III)alamin serves as cofactor.

It carries out the reaction a 2'-deoxyribonucleoside 5'-diphosphate + [thioredoxin]-disulfide + H2O = a ribonucleoside 5'-diphosphate + [thioredoxin]-dithiol. In terms of biological role, catalyzes the reduction of ribonucleotides to deoxyribonucleotides. May function to provide a pool of deoxyribonucleotide precursors for DNA repair during oxygen limitation and/or for immediate growth after restoration of oxygen. The protein is Vitamin B12-dependent ribonucleotide reductase (nrdJ) of Rhodopirellula baltica (strain DSM 10527 / NCIMB 13988 / SH1).